The primary structure comprises 308 residues: tRNA dimethylallyltransferase (308 aa).

9–16 (GPTAAGKT) is an ATP binding site. Substrate is bound at residue 11-16 (TAAGKT). Interaction with substrate tRNA regions lie at residues 34 to 37 (DSMQ) and 158 to 162 (QRLLR).

The protein belongs to the IPP transferase family. Monomer. Mg(2+) is required as a cofactor.

The enzyme catalyses adenosine(37) in tRNA + dimethylallyl diphosphate = N(6)-dimethylallyladenosine(37) in tRNA + diphosphate. Catalyzes the transfer of a dimethylallyl group onto the adenine at position 37 in tRNAs that read codons beginning with uridine, leading to the formation of N6-(dimethylallyl)adenosine (i(6)A). In Maricaulis maris (strain MCS10) (Caulobacter maris), this protein is tRNA dimethylallyltransferase.